Reading from the N-terminus, the 806-residue chain is Glycerol-3-phosphate acyltransferase (806 aa).

The short motif at 305 to 310 (CHRSHM) is the HXXXXD motif element.

The protein belongs to the GPAT/DAPAT family.

Its subcellular location is the cell inner membrane. The enzyme catalyses sn-glycerol 3-phosphate + an acyl-CoA = a 1-acyl-sn-glycero-3-phosphate + CoA. The protein operates within phospholipid metabolism; CDP-diacylglycerol biosynthesis; CDP-diacylglycerol from sn-glycerol 3-phosphate: step 1/3. The protein is Glycerol-3-phosphate acyltransferase of Salmonella agona (strain SL483).